The following is a 499-amino-acid chain: Trichoplein keratin filament-binding protein (499 aa).

Residues 12–38 (SRVRTLEQQLVRQREQEARLRRQWEQH) adopt a coiled-coil conformation. 2 disordered regions span residues 46–78 (DVRS…EEKQ) and 169–209 (VQQQ…EEEN). Residues 50-67 (SKQAQWSSRQSFHRSMSA) are compositionally biased toward polar residues. 2 stretches are compositionally biased toward basic and acidic residues: residues 69 to 78 (QRDRMREEKQ) and 172 to 209 (QEKK…EEEN). Coiled coils occupy residues 71-133 (DRMR…ERRK), 168-306 (QVQQ…ALLE), and 359-484 (WEKR…MIRQ). The tract at residues 74–499 (REEKQRKLEE…IHSRPRSAWT (426 aa)) is interaction with keratin proteins. Residues 260 to 426 (KMMEESRRKT…RLTLRLEKEQ (167 aa)) are trichohyalin/plectin homology domain.

The protein belongs to the TCHP family.

Its subcellular location is the cytoplasm. It localises to the cytoskeleton. The protein resides in the microtubule organizing center. The protein localises to the centrosome. In terms of biological role, may act as a 'capping' or 'branching' protein for keratin filaments in the cell periphery. May regulate K8/K18 filament and desmosome organization mainly at the apical or peripheral regions of simple epithelial cells. This chain is Trichoplein keratin filament-binding protein, found in Danio rerio (Zebrafish).